Consider the following 168-residue polypeptide: NADH-ubiquinone oxidoreductase chain 6 (168 aa).

Helical transmembrane passes span 26–46 (LGLM…LIIF), 52–72 (LLFL…ISLI), 82–102 (VFAY…FVMK), 111–131 (SMSL…IMLY), and 134–154 (FFCY…VVKI).

Belongs to the complex I subunit 6 family.

Its subcellular location is the mitochondrion membrane. It carries out the reaction a ubiquinone + NADH + 5 H(+)(in) = a ubiquinol + NAD(+) + 4 H(+)(out). Core subunit of the mitochondrial membrane respiratory chain NADH dehydrogenase (Complex I) that is believed to belong to the minimal assembly required for catalysis. Complex I functions in the transfer of electrons from NADH to the respiratory chain. The immediate electron acceptor for the enzyme is believed to be ubiquinone. The polypeptide is NADH-ubiquinone oxidoreductase chain 6 (ND6) (Heterololigo bleekeri (Spear squid)).